A 55-amino-acid polypeptide reads, in one-letter code: MPQLNPAPWFAILVFSWLVFLTVIPPKVLGHTFTNEPTSQSTEKAKPEPWNWPWH.

Residues 4–24 traverse the membrane as a helical segment; it reads LNPAPWFAILVFSWLVFLTVI. Residues 34–55 form a disordered region; the sequence is TNEPTSQSTEKAKPEPWNWPWH.

Belongs to the ATPase protein 8 family. In terms of assembly, component of the ATP synthase complex composed at least of ATP5F1A/subunit alpha, ATP5F1B/subunit beta, ATP5MC1/subunit c (homooctomer), MT-ATP6/subunit a, MT-ATP8/subunit 8, ATP5ME/subunit e, ATP5MF/subunit f, ATP5MG/subunit g, ATP5MK/subunit k, ATP5MJ/subunit j, ATP5F1C/subunit gamma, ATP5F1D/subunit delta, ATP5F1E/subunit epsilon, ATP5PF/subunit F6, ATP5PB/subunit b, ATP5PD/subunit d, ATP5PO/subunit OSCP. ATP synthase complex consists of a soluble F(1) head domain (subunits alpha(3) and beta(3)) - the catalytic core - and a membrane F(0) domain - the membrane proton channel (subunits c, a, 8, e, f, g, k and j). These two domains are linked by a central stalk (subunits gamma, delta, and epsilon) rotating inside the F1 region and a stationary peripheral stalk (subunits F6, b, d, and OSCP).

The protein resides in the mitochondrion membrane. In terms of biological role, subunit 8, of the mitochondrial membrane ATP synthase complex (F(1)F(0) ATP synthase or Complex V) that produces ATP from ADP in the presence of a proton gradient across the membrane which is generated by electron transport complexes of the respiratory chain. ATP synthase complex consist of a soluble F(1) head domain - the catalytic core - and a membrane F(1) domain - the membrane proton channel. These two domains are linked by a central stalk rotating inside the F(1) region and a stationary peripheral stalk. During catalysis, ATP synthesis in the catalytic domain of F(1) is coupled via a rotary mechanism of the central stalk subunits to proton translocation. In vivo, can only synthesize ATP although its ATP hydrolase activity can be activated artificially in vitro. Part of the complex F(0) domain. This chain is ATP synthase F(0) complex subunit 8, found in Oncorhynchus mykiss (Rainbow trout).